The primary structure comprises 238 residues: Uridylate kinase (238 aa).

12-15 (KLSG) is an ATP binding site. Position 54 (glycine 54) interacts with UMP. Glycine 55 and arginine 59 together coordinate ATP. UMP contacts are provided by residues aspartate 74 and 135-142 (TGNPFFTT). ATP-binding residues include threonine 162, tyrosine 168, and aspartate 171.

This sequence belongs to the UMP kinase family. In terms of assembly, homohexamer.

It localises to the cytoplasm. It carries out the reaction UMP + ATP = UDP + ADP. Its pathway is pyrimidine metabolism; CTP biosynthesis via de novo pathway; UDP from UMP (UMPK route): step 1/1. Its activity is regulated as follows. Inhibited by UTP. Functionally, catalyzes the reversible phosphorylation of UMP to UDP. The polypeptide is Uridylate kinase (Bordetella pertussis (strain Tohama I / ATCC BAA-589 / NCTC 13251)).